Here is a 216-residue protein sequence, read N- to C-terminus: LGTDIISPPVCGNELLEVGEECDCGFPRNCRDPCCDATTCKLHSWVECESGECCGQCKFTSAGNECRPARSECDIAESCTGQSADCPMDDFHRNGQPCLNNFGYCYNGNCPILYHQCYALFGSNVYEAEDSCFERNQKGDDDGYCRKENGEKIPCAPEDVKCGRLYCKDNSPGPNDSCKTFNSNEDDHKEMVLPGTKCADGKVCSNGHCVDVASAY.

The Disintegrin domain occupies 8–94 (PPVCGNELLE…DCPMDDFHRN (87 aa)). Residues Val-10, Asn-13, Leu-15, Glu-17, Glu-20, and Asp-23 each coordinate Ca(2+). Cystine bridges form between Cys-11–Cys-40, Cys-22–Cys-35, Cys-24–Cys-30, Cys-34–Cys-57, Cys-48–Cys-54, Cys-53–Cys-79, Cys-66–Cys-86, Cys-73–Cys-105, Cys-98–Cys-110, Cys-117–Cys-167, Cys-132–Cys-178, Cys-145–Cys-155, Cys-162–Cys-204, and Cys-198–Cys-209. The short motif at 72-74 (ECD) is the D/ECD-tripeptide element. Asn-175 is a glycosylation site (N-linked (GlcNAc...) asparagine).

It belongs to the venom metalloproteinase (M12B) family. P-III subfamily. P-IIIa sub-subfamily. As to quaternary structure, monomer. The cofactor is Zn(2+). As to expression, expressed by the venom gland.

The protein localises to the secreted. Its function is as follows. Zinc protease from snake venom that induces hemorrhage. In Crotalus ruber ruber (Red diamond rattlesnake), this protein is Snake venom metalloproteinase HT-1.